A 565-amino-acid chain; its full sequence is Oxygen-dependent choline dehydrogenase (565 aa).

Position 7–36 (7–36 (DYIICGAGSAGNVLATRLTEDPDVTVLLLE)) interacts with FAD. His474 serves as the catalytic Proton acceptor.

This sequence belongs to the GMC oxidoreductase family. FAD serves as cofactor.

The enzyme catalyses choline + A = betaine aldehyde + AH2. It catalyses the reaction betaine aldehyde + NAD(+) + H2O = glycine betaine + NADH + 2 H(+). The protein operates within amine and polyamine biosynthesis; betaine biosynthesis via choline pathway; betaine aldehyde from choline (cytochrome c reductase route): step 1/1. Its function is as follows. Involved in the biosynthesis of the osmoprotectant glycine betaine. Catalyzes the oxidation of choline to betaine aldehyde and betaine aldehyde to glycine betaine at the same rate. This chain is Oxygen-dependent choline dehydrogenase, found in Burkholderia thailandensis (strain ATCC 700388 / DSM 13276 / CCUG 48851 / CIP 106301 / E264).